The following is a 366-amino-acid chain: Ribosomal RNA large subunit methyltransferase M (366 aa).

S-adenosyl-L-methionine is bound by residues Ser188, 221–224 (CPGG), Asp240, Asp260, and Asp277. The active-site Proton acceptor is the Lys306.

This sequence belongs to the class I-like SAM-binding methyltransferase superfamily. RNA methyltransferase RlmE family. RlmM subfamily. Monomer.

It localises to the cytoplasm. It carries out the reaction cytidine(2498) in 23S rRNA + S-adenosyl-L-methionine = 2'-O-methylcytidine(2498) in 23S rRNA + S-adenosyl-L-homocysteine + H(+). Its function is as follows. Catalyzes the 2'-O-methylation at nucleotide C2498 in 23S rRNA. The chain is Ribosomal RNA large subunit methyltransferase M from Musicola paradisiaca (strain Ech703) (Dickeya paradisiaca).